We begin with the raw amino-acid sequence, 99 residues long: MNQERVFKVLLGPHISEKATVLAESKKQFVFKVATDATKLEIKKAVEALFDVKVANVTTLNVQGKTKRTVRGLGKRNDWKKAYVALQPGQDLDFASSAE.

Belongs to the universal ribosomal protein uL23 family. As to quaternary structure, part of the 50S ribosomal subunit. Contacts protein L29, and trigger factor when it is bound to the ribosome.

One of the early assembly proteins it binds 23S rRNA. One of the proteins that surrounds the polypeptide exit tunnel on the outside of the ribosome. Forms the main docking site for trigger factor binding to the ribosome. This chain is Large ribosomal subunit protein uL23, found in Azotobacter vinelandii (strain DJ / ATCC BAA-1303).